We begin with the raw amino-acid sequence, 257 residues long: uncharacterized protein (257 aa).

Positions methionine 1–glycine 22 are cleaved as a signal peptide. A lipid anchor (N-palmitoyl cysteine) is attached at cysteine 23. Cysteine 23 carries S-diacylglycerol cysteine lipidation.

This sequence belongs to the staphylococcal tandem lipoprotein family.

It is found in the cell membrane. This is an uncharacterized protein from Staphylococcus aureus (strain MRSA252).